The chain runs to 2324 residues: Myomegalin (2324 aa).

Coiled-coil stretches lie at residues 41 to 132 (REDV…LVEA), 158 to 205 (QVKL…LLEE), 238 to 288 (DSHL…SLKE), and 348 to 638 (LFCS…NKQA). Disordered regions lie at residues 72–96 (TWADEEDLNSQNEAELRRQVEEPQQ) and 205–240 (EPGGMEVQPMPKGLPTQQKPDLNETPTTQPSVSDSH). Positions 85 to 96 (AELRRQVEEPQQ) are enriched in basic and acidic residues. Residues 219–238 (PTQQKPDLNETPTTQPSVSD) are compositionally biased toward polar residues. A disordered region spans residues 701 to 747 (PAGATSVGPHHGEQTDQGSTQMPSRDDSTSLTAREEASIPRSTLGDS). Thr705 is subject to Phosphothreonine. Residues 724–738 (SRDDSTSLTAREEAS) show a composition bias toward basic and acidic residues. 3 coiled-coil regions span residues 745 to 822 (GDSD…QLVD), 855 to 923 (ENRR…EEVL), and 1011 to 1043 (LRAEIHQPLEEKRKAEAELKELKAQIEEAGFSS). 2 disordered regions span residues 1155–1182 (LPSSEKHQHQEQENMTARPGPRPQSLKL) and 1195–1216 (NKSQAQDSGHQPEFSLPGSTKH). 3 coiled-coil regions span residues 1213–1241 (STKHLRSQLAQCRQRYQDLQEKLLISEAT), 1346–1384 (TSDDSSLLRKDIRDLKAQLQNAYKVIQNLRSRVRSLSAT), and 1430–1455 (GLQAKKNLENLIQRVSQLEAQLPKTG). Disordered regions lie at residues 1540–1559 (TDRLTSKFSTKDHKSEKEEA), 1589–1610 (RFSSPPSSHAASDSHRSASSTS), 1628–1685 (YTHY…IPKP), 1742–1773 (APPTSTSTLLSNHTEASSPRYSNPAQPHSPAR), 1857–1877 (LSSTARENGSTSHFYSQGLES), and 2081–2140 (NQQP…TPPK). The Olduvai domain maps to 1550 to 1641 (KDHKSEKEEA…EEKKPSPSNS (92 aa)). Low complexity-rich tracts occupy residues 1591–1610 (SSPPSSHAASDSHRSASSTS) and 1637–1646 (SPSNSAASAS). Polar residues predominate over residues 1743–1767 (PPTSTSTLLSNHTEASSPRYSNPAQ). Positions 1821 to 2056 (GADLLEEHLG…LRLQLEQQMD (236 aa)) form a coiled coil. 2 stretches are compositionally biased toward polar residues: residues 2081–2090 (NQQPPFQGSA) and 2108–2135 (PSNSCSVPGSDSAIISRTNNGSDESAAT). Positions 2248 to 2274 (EEGNLMEKELLDLRAQVSQQQQLLQST) form a coiled coil.

As to quaternary structure, interacts with PDE4D. May interact with MAPRE1 and MAPRE3. May form a pericentrosomal complex with AKAP9, CDK5RAP2 and EB1/MAPRE1 in an isoform-specific manner; within this complex, may mediate MAPRE1-binding to CDK5RAP2. Interaction with AKAP9 stabilizes both proteins. May interact with CAMSAP2 in an isoform-specific manner; this interaction is much stronger in the presence of AKAP9. In complex with AKAP9, recruits CAMSAP2 to the Golgi apparatus. May interact with unglycosylated LGALS3BP in an isoform-specific manner; this interaction may connect the pericentrosomal complex to the gamma-tubulin ring complex (gamma-TuRC) to promote microtubule assembly and acetylation. Abundantly expressed in heart and skeletal muscle and to a lower extent in brain, lung and liver. Expressed in heart, skeletal muscle and testis (at protein level).

It is found in the cytoplasm. The protein localises to the cytoskeleton. Its subcellular location is the microtubule organizing center. The protein resides in the centrosome. It localises to the golgi apparatus. In terms of biological role, functions as an anchor sequestering components of the cAMP-dependent pathway to Golgi and/or centrosomes. May participate in microtubule dynamics, promoting microtubule assembly, in an isoform-specific manner. Depending upon the cell context, may act at the level of the Golgi apparatus or that of the centrosome. In complex with AKAP9, recruits CAMSAP2 to the Golgi apparatus and tethers non-centrosomal minus-end microtubules to the Golgi, an important step for polarized cell movement. In complex with AKAP9, EB1/MAPRE1 and CDK5RAP2, contributes to microtubules nucleation and extension from the centrosome to the cell periphery, a crucial process for directed cell migration, mitotic spindle orientation and cell-cycle progression. The protein is Myomegalin (Pde4dip) of Rattus norvegicus (Rat).